The chain runs to 430 residues: Mannan endo-1,4-beta-mannosidase (430 aa).

Glutamate 173 serves as the catalytic Proton donor. The active-site Nucleophile is glutamate 269. 2 CBM10 domains span residues serine 357–alanine 390 and serine 395–alanine 424.

The protein belongs to the glycosyl hydrolase 5 (cellulase A) family.

The catalysed reaction is Random hydrolysis of (1-&gt;4)-beta-D-mannosidic linkages in mannans, galactomannans and glucomannans.. In terms of biological role, catalyzes the endo hydrolysis of beta-1,4-linked mannan, galactomannan and glucomannan. It is able to hydrolyze mannosidic linkages that are flanked by mannose or glucose. The chain is Mannan endo-1,4-beta-mannosidase from Cellvibrio japonicus (strain Ueda107) (Pseudomonas fluorescens subsp. cellulosa).